The following is a 567-amino-acid chain: Nucleolus and neural progenitor protein (567 aa).

Ser265 is subject to Phosphoserine. Residues 437–457 form a disordered region; the sequence is SKHHLRQRRSQNKFLRRQRKP. Residues 442 to 460 are nuclear localization signal; that stretch reads RQRRSQNKFLRRQRKPQRK.

This sequence belongs to the nepro family.

It is found in the nucleus. Its subcellular location is the nucleolus. Its function is as follows. May play a role in cortex development as part of the Notch signaling pathway. Downstream of Notch may repress the expression of proneural genes and inhibit neuronal differentiation thereby maintaining neural progenitors. May also play a role in preimplentation embryo development. This Homo sapiens (Human) protein is Nucleolus and neural progenitor protein.